Consider the following 1141-residue polypeptide: MPEPTKKEENEVPAPAPPPEEPSKEKEAGTTPAKDWTLVETPPGEEQAKQNANSQLSILFIEKPQGGTVKVGEDITFIAKVKAEDLLRKPTIKWFKGKWMDLASKAGKHLQLKETFERHSRVYTFEMQIIKAKDNFAGNYRCEVTYKDKFDSCSFDLEVHESTGTTPNIDIRSAFKRSGEGQEDAGELDFSGLLKRREVKQQEEEPQVDVWELLKNAKPSEYEKIAFQYGITDLRGMLKRLKRMRREEKKSAAFAKILDPAYQVDKGGRVRFVVELADPKLEVKWYKNGQEIRPSTKYIFEHKGCQRILFINNCQMTDDSEYYVTAGDEKCSTELFVREPPIMVTKQLEDTTAYCGERVELECEVSEDDANVKWFKNGEEIIPGPKSRYRIRVEGKKHILIIEGATKADAAEYSVMTTGGQSSAKLSVDLKPLKILTPLTDQTVNLGKEICLKCEISENIPGKWTKNGLPVQESDRLKVVHKGRIHKLVIANALTEDEGDYVFAPDAYNVTLPAKVHVIDPPKIILDGLDADNTVTVIAGNKLRLEIPISGEPPPKAMWSRGDKAIMEGSGRIRTESYPDSSTLVIDIAERDDSGVYHINLKNEAGEAHASIKVKVVDFPDPPVAPTVTEVGDDWCIMNWEPPAYDGGSPILGYFIERKKKQSSRWMRLNFDLCKETTFEPKKMIEGVAYEVRIFAVNAIGISKPSMPSRPFVPLAVTSPPTLLTVDSVTDTTVTMRWRPPDHIGAAGLDGYVLEYCFEGSTSAKQSDENGEAAYDLPAEDWIVANKDLIDKTKFTITGLPTDAKIFVRVKAVNAAGASEPKYYSQPILVKEIIEPPKIRIPRHLKQTYIRRVGEAVNLVIPFQGKPRPELTWKKDGAEIDKNQINIRNSETDTIIFIRKAERSHSGKYDLQVKVDKFVETASIDIQIIDRPGPPQIVKIEDVWGENVALTWTPPKDDGNAAITGYTIQKADKKSMEWFTVIEHYHRTSATITELVIGNEYYFRVFSENMCGLSEDATMTKESAVIARDGKIYKNPVYEDFDFSEAPMFTQPLVNTYAIAGYNATLNCSVRGNPKPKITWMKNKVAIVDDPRYRMFSNQGVCTLEIRKPSPYDGGTYCCKAVNDLGTVEIECKLEVKVIAQ.

Residues 1-10 are compositionally biased toward basic and acidic residues; that stretch reads MPEPTKKEEN. Positions 1-51 are disordered; the sequence is MPEPTKKEENEVPAPAPPPEEPSKEKEAGTTPAKDWTLVETPPGEEQAKQN. 5 consecutive Ig-like C2-type domains span residues 72–144, 251–340, 341–431, 432–520, and 522–619; these read GEDI…RCEV, SAAF…VREP, PIMV…VDLK, PLKI…HVID, and PKII…VVDF. At Thr406 the chain carries Phosphothreonine. A Phosphoserine modification is found at Ser611. Fibronectin type-III domains lie at 622–721 and 722–833; these read PPVA…TSPP and TLLT…VKEI. Thr798 carries the post-translational modification Phosphothreonine. A Phosphotyrosine modification is found at Tyr823. Residues 837–931 form the Ig-like C2-type 6 domain; sequence PKIRIPRHLK…ASIDIQIIDR (95 aa). A Fibronectin type-III 3 domain is found at 934 to 1029; that stretch reads PPQIVKIEDV…TKESAVIARD (96 aa). The Ig-like C2-type 7 domain maps to 1047–1141; the sequence is PMFTQPLVNT…CKLEVKVIAQ (95 aa).

The protein belongs to the immunoglobulin superfamily. MyBP family. In terms of assembly, interacts with USP25 (isoform USP25m only); the interaction prevents proteasomal degradation of MYBPC1.

Thick filament-associated protein located in the crossbridge region of vertebrate striated muscle a bands. Slow skeletal protein that binds to both myosin and actin. In vitro, binds to native thin filaments and modifies the activity of actin-activated myosin ATPase. May modulate muscle contraction or may play a more structural role. This chain is Myosin-binding protein C, slow-type (MYBPC1), found in Homo sapiens (Human).